Consider the following 267-residue polypeptide: Kallikrein-14 (267 aa).

An N-terminal signal peptide occupies residues 1-34 (MSLRVLGSGTWPSAPKMFLLLTALQVLAIAMTQS). Residues 35-40 (QEDENK) constitute a propeptide, activation peptide. A Peptidase S1 domain is found at 41-265 (IIGGHTCTRS…YRSWIEETMR (225 aa)). Intrachain disulfides connect Cys-47–Cys-180, Cys-68–Cys-84, Cys-159–Cys-226, Cys-191–Cys-205, and Cys-216–Cys-241. Residues His-83 and Asp-127 each act as charge relay system in the active site. The active-site Charge relay system is Ser-220.

Belongs to the peptidase S1 family. Kallikrein subfamily. In terms of processing, proteolytic cleavage of the activation peptide produces the active enzyme. In terms of tissue distribution, highly expressed in CNS, bone marrow and fetal liver. Also expressed in breast, thyroid, kidney, colon, pancreas, spleen, prostate, uterus, small intestine, placenta and skeletal muscle. Among 40 tissues tested, the highest expression is detected in skin followed by breast and prostate (at protein level). Expressed in stratum corneum by sweat ducts and sweat glands and detected in sweat (at protein level).

It localises to the secreted. The protein localises to the extracellular space. Inhibited by SERPINA1, SERPINC1, SERPINE1, SERPINF2, aprotinin, soybean, trypsin inhibitor and leupeptin. Inhibited by serine protease inhibitor SPINK5. Has an autoproteolytic activity which may have a regulatory effect. Activated by citrate and inhibited by zinc and to a lower extent by manganese. Its function is as follows. Serine-type endopeptidase with a dual trypsin-like and chymotrypsin-like substrate specificity. May activate/inactivate the proteinase-activated receptors F2R, F2RL1 and F2RL3 and other kallikreins including KLK1, KLK3, KLK5 and KLK11. May function in seminal clot liquefaction through direct cleavage of the semenogelin SEMG1 and SEMG2 and activation of KLK3. May function through desmoglein DSG1 cleavage in epidermal desquamation a process by which the most superficial corneocytes are shed from the skin surface. May be involved in several aspects of tumor progression including growth, invasion and angiogenesis. The sequence is that of Kallikrein-14 (KLK14) from Homo sapiens (Human).